A 478-amino-acid polypeptide reads, in one-letter code: Septin-4 (478 aa).

2 disordered regions span residues 40–74 and 87–115; these read DFSG…LYDD and ADNQ…LDPY. Residues 95-108 show a composition bias toward low complexity; that stretch reads APAPLSPSARPRSP. Phosphoserine is present on residues Ser117 and Ser118. The Septin-type G domain maps to 141–414; it reads KGFDFTLMVA…ENYRAQCIQS (274 aa). A G1 motif region spans residues 151-158; sequence GESGLGKS. GTP contacts are provided by residues 151–158 and Thr185; that span reads GESGLGKS. The tract at residues 208–211 is G3 motif; that stretch reads DTPG. The interval 289–292 is G4 motif; the sequence is AKAD. 290-298 is a binding site for GTP; it reads KADTLTPPE. Ser325 carries the phosphoserine modification. Positions 348 and 363 each coordinate GTP. Residues 428–448 are disordered; that stretch reads LTRESGTDFPIPAVPPGTDPE. Ser432 carries the post-translational modification Phosphoserine. Thr434 carries the post-translational modification Phosphothreonine. Residues 446–478 adopt a coiled-coil conformation; sequence DPETEKLIREKDEELRRMQEILHKIQKQMKETY.

It belongs to the TRAFAC class TrmE-Era-EngA-EngB-Septin-like GTPase superfamily. Septin GTPase family. Septins polymerize into heterooligomeric protein complexes that form filaments, and can associate with cellular membranes, actin filaments and microtubules. GTPase activity is required for filament formation. Interacts with SEPTIN8. Component of a septin core octameric complex consisting of SEPTIN12, SEPTIN7, SEPTIN6 and SEPTIN2 or SEPTIN4 in the order 12-7-6-2-2-6-7-12 or 12-7-6-4-4-6-7-12. Interacts with SEPTIN14 (via C-terminus). Interacts with DYRK1A. Interacts with SLC6A3/DAT and SNCA/alpha-synuclein. Interacts with STX1A; in the striatum. Interacts with XIAP (via BIR3 domain) following the induction of apoptosis. Interacts with AREL1 (via HECT domain); in the cytoplasm following induction of apoptosis. In terms of processing, ubiquitinated by AREL1. Phosphorylated by DYRK1A.

The protein resides in the cytoplasm. It is found in the cell projection. It localises to the cilium. Its subcellular location is the flagellum. The protein localises to the cytoplasmic vesicle. The protein resides in the secretory vesicle. It is found in the axon. It localises to the dendrite. Its subcellular location is the perikaryon. The protein localises to the synapse. Filament-forming cytoskeletal GTPase. Pro-apoptotic protein involved in LGR5-positive intestinal stem cell and Paneth cell expansion in the intestines, via its interaction with XIAP. May also play a role in the regulation of cell fate in the intestine. Positive regulator of apoptosis involved in hematopoietic stem cell homeostasis; via its interaction with XIAP. Negative regulator of repair and hair follicle regeneration in response to injury, due to inhibition of hair follicle stem cell proliferation, potentially via its interaction with XIAP. Plays an important role in male fertility and sperm motility. During spermiogenesis, essential for the establishment of the annulus (a fibrous ring structure connecting the midpiece and the principal piece of the sperm flagellum) which is a requisite for the structural and mechanical integrity of the sperm. Involved in the migration of cortical neurons and the formation of neuron leading processes during embryonic development. Required for dopaminergic metabolism in presynaptic autoreceptors; potentially via activity as a presynaptic scaffold protein. The polypeptide is Septin-4 (Macaca fascicularis (Crab-eating macaque)).